The primary structure comprises 244 residues: ATP-dependent Clp protease ATP-binding subunit CLPT4, chloroplastic (244 aa).

The N-terminal 64 residues, 1 to 64 (MQALQASRLT…WRSSGRVITR (64 aa)), are a transit peptide targeting the chloroplast. A compositionally biased stretch (low complexity) spans 30–48 (SRPISSGVSSSQELSSRSS). Disordered regions lie at residues 30 to 55 (SRPISSGVSSSQELSSRSSAPATKSW) and 220 to 244 (GRRYQLPDETEEAGPLKSEDDVSFL).

This sequence belongs to the ClpA/ClpB family.

It localises to the plastid. Its subcellular location is the chloroplast. Functionally, accessory protein regulating the assembly of the plastid Clp protease system. The sequence is that of ATP-dependent Clp protease ATP-binding subunit CLPT4, chloroplastic from Chlamydomonas reinhardtii (Chlamydomonas smithii).